A 766-amino-acid chain; its full sequence is BMP/retinoic acid-inducible neural-specific protein 3 (766 aa).

Positions 1 to 33 (MIWRSRAGAELFSLMALWEWIALSLHCWVLAVA) are cleaved as a signal peptide. Residues 74 to 264 (RYKIYREFGR…FVQAALSYIA (191 aa)) enclose the MACPF domain. Residues N168, N337, N456, N562, N609, and N641 are each glycosylated (N-linked (GlcNAc...) asparagine).

This sequence belongs to the BRINP family. In terms of tissue distribution, strongly expressed in oral keratinocytes compared to the weak expression in tongue squamous cell carcinoma (SCC). Expressed in endothelial and aortic smooth muscle cells. Overexpressed in gonadotropinomas compared to normal pituitarie tissues.

The protein localises to the secreted. Its subcellular location is the mitochondrion. Its function is as follows. Inhibits neuronal cell proliferation by negative regulation of the cell cycle transition. Promotes pituitary gonadotrope cell proliferation, migration and invasion, when overexpressed. May play a role in cell pituitary tumor development. This is BMP/retinoic acid-inducible neural-specific protein 3 (BRINP3) from Homo sapiens (Human).